The primary structure comprises 87 residues: Mu-conotoxin cal12b (87 aa).

The signal sequence occupies residues 1 to 19; that stretch reads MKLTCVLVVLLLLLPYGDL. A propeptide spanning residues 20 to 42 is cleaved from the precursor; that stretch reads ITNNYIRGAARKVTPWRRNLKTR. Intrachain disulfides connect Cys45-Cys58, Cys53-Cys70, Cys60-Cys75, and Cys69-Cys81. Trp59 is subject to 6'-bromotryptophan. A 4-hydroxyproline modification is found at Pro65. 6'-bromotryptophan is present on residues Trp79 and Trp80. The residue at position 82 (Pro82) is a 4-hydroxyproline. Trp86 is modified (6'-bromotryptophan).

In terms of tissue distribution, expressed by the venom duct.

The protein localises to the secreted. Functionally, mu-conotoxins block voltage-gated sodium channels. This toxin reversibly blocks voltage-gated sodium channel in cephalopods (tested on squid giant-fiber-lobe neurons) with an inhibitor constant (Ki) of 15 nmol/l, with no alteration in the voltage dependence of sodium conductance or on the kinetics of inactivation. Has no effect on sodium channels of the two gastropod S.luhuanus and A.californica (which are not natural prey). The sequence is that of Mu-conotoxin cal12b from Californiconus californicus (California cone).